A 464-amino-acid chain; its full sequence is 3-isopropylmalate dehydratase large subunit (464 aa).

[4Fe-4S] cluster-binding residues include Cys337, Cys397, and Cys400.

It belongs to the aconitase/IPM isomerase family. LeuC type 1 subfamily. As to quaternary structure, heterodimer of LeuC and LeuD. It depends on [4Fe-4S] cluster as a cofactor.

It catalyses the reaction (2R,3S)-3-isopropylmalate = (2S)-2-isopropylmalate. It functions in the pathway amino-acid biosynthesis; L-leucine biosynthesis; L-leucine from 3-methyl-2-oxobutanoate: step 2/4. In terms of biological role, catalyzes the isomerization between 2-isopropylmalate and 3-isopropylmalate, via the formation of 2-isopropylmaleate. This Bacillus thuringiensis (strain Al Hakam) protein is 3-isopropylmalate dehydratase large subunit.